Consider the following 76-residue polypeptide: Acyl carrier protein (76 aa).

In terms of domain architecture, Carrier spans 1 to 75 (MIFEKIKDLI…DIVFYITKNT (75 aa)). Position 35 is an O-(pantetheine 4'-phosphoryl)serine (S35).

This sequence belongs to the acyl carrier protein (ACP) family. 4'-phosphopantetheine is transferred from CoA to a specific serine of apo-ACP by AcpS. This modification is essential for activity because fatty acids are bound in thioester linkage to the sulfhydryl of the prosthetic group.

It is found in the cytoplasm. Its pathway is lipid metabolism; fatty acid biosynthesis. Functionally, carrier of the growing fatty acid chain in fatty acid biosynthesis. This Aster yellows witches'-broom phytoplasma (strain AYWB) protein is Acyl carrier protein.